The sequence spans 282 residues: Stage 0 sporulation protein J (282 aa).

The segment at residues 139–158 (EQLAKRLGKSRPHIANHLRL) is a DNA-binding region (H-T-H motif).

The protein belongs to the ParB family.

The protein localises to the cytoplasm. Its subcellular location is the nucleoid. Required for the initiation of sporulation and for normal chromosome segregation. Antagonizes sporulation inhibition by Soj. It probably interacts with a specific DNA site and other proteins involved in partitioning and cell division, and antagonizes Soj in response to cell cycle events related to chromosome partitioning. This is Stage 0 sporulation protein J from Bacillus subtilis (strain 168).